Consider the following 543-residue polypeptide: Proline--tRNA ligase, chloroplastic/mitochondrial (543 aa).

The interval 41 to 63 (ATAPSGTASPETKSSEVDRLRSD) is disordered. Basic and acidic residues predominate over residues 53-63 (KSSEVDRLRSD).

It belongs to the class-II aminoacyl-tRNA synthetase family.

The protein localises to the plastid. It is found in the chloroplast. Its subcellular location is the mitochondrion. The catalysed reaction is tRNA(Pro) + L-proline + ATP = L-prolyl-tRNA(Pro) + AMP + diphosphate. Catalyzes the attachment of proline to tRNA(Pro) in a two-step reaction: proline is first activated by ATP to form Pro-AMP and then transferred to the acceptor end of tRNA(Pro). The sequence is that of Proline--tRNA ligase, chloroplastic/mitochondrial from Arabidopsis thaliana (Mouse-ear cress).